A 217-amino-acid polypeptide reads, in one-letter code: Somatotropin (217 aa).

An N-terminal signal peptide occupies residues 1–26 (MMAAGPRTSLLLAFALLCLPWTQVVG). H46 is a binding site for Zn(2+). C79 and C190 form a disulfide bridge. S132 carries the post-translational modification Phosphoserine. E199 contacts Zn(2+). Cysteines 207 and 215 form a disulfide.

It belongs to the somatotropin/prolactin family.

It localises to the secreted. Its function is as follows. Plays an important role in growth control. Its major role in stimulating body growth is to stimulate the liver and other tissues to secrete IGF1. It stimulates both the differentiation and proliferation of myoblasts. It also stimulates amino acid uptake and protein synthesis in muscle and other tissues. This chain is Somatotropin (GH1), found in Bos mutus grunniens (Wild yak).